Consider the following 174-residue polypeptide: Chorismate pyruvate-lyase (174 aa).

4 residues coordinate substrate: Met36, Arg78, Leu116, and Glu157.

This sequence belongs to the UbiC family. As to quaternary structure, monomer.

The protein localises to the cytoplasm. The enzyme catalyses chorismate = 4-hydroxybenzoate + pyruvate. It participates in cofactor biosynthesis; ubiquinone biosynthesis. Removes the pyruvyl group from chorismate, with concomitant aromatization of the ring, to provide 4-hydroxybenzoate (4HB) for the ubiquinone pathway. This Erwinia tasmaniensis (strain DSM 17950 / CFBP 7177 / CIP 109463 / NCPPB 4357 / Et1/99) protein is Chorismate pyruvate-lyase.